The following is a 290-amino-acid chain: Oxaloacetate decarboxylase 2 (290 aa).

Ser-50 provides a ligand contact to substrate. Mg(2+) is bound at residue Asp-88. Residues Arg-159 and His-235 each coordinate substrate.

It belongs to the isocitrate lyase/PEP mutase superfamily. Oxaloacetate decarboxylase family. As to quaternary structure, homotetramer; dimer of dimers. Mg(2+) is required as a cofactor.

It catalyses the reaction oxaloacetate + H(+) = pyruvate + CO2. Functionally, catalyzes the decarboxylation of oxaloacetate into pyruvate. Seems to play a role in maintaining cellular concentrations of bicarbonate and pyruvate. In Pseudomonas fluorescens (strain Pf0-1), this protein is Oxaloacetate decarboxylase 2.